The chain runs to 118 residues: UPF0449 protein C19orf25 (118 aa).

Tyr63 carries the post-translational modification Phosphotyrosine. Residues 81–109 are a coiled coil; sequence NVLRQRCELLQRAGEDLEREVAQMKQAAL.

It belongs to the UPF0449 family.

In Homo sapiens (Human), this protein is UPF0449 protein C19orf25 (C19orf25).